The primary structure comprises 471 residues: Cleavage and polyadenylation specificity factor subunit 7 (471 aa).

The segment at 34 to 68 is disordered; the sequence is VLTAASQPSDDRSSSTEPPPPVRQEPAPKPNNKTP. Residues 50-62 show a composition bias toward pro residues; the sequence is EPPPPVRQEPAPK. The region spanning 82–162 is the RRM domain; the sequence is AAVYVGSFSW…EKVDVRPATR (81 aa). Positions 176 to 220 are disordered; it reads ECVRVPRGGIPPRAHSRDSSDSADGRATPSENLVPSSARVDKPPS. Positions 190–199 are enriched in basic and acidic residues; sequence HSRDSSDSAD. Threonine 203 carries the phosphothreonine modification. At serine 205 the chain carries Phosphoserine. Residue lysine 354 forms a Glycyl lysine isopeptide (Lys-Gly) (interchain with G-Cter in SUMO2) linkage. Residues 409-471 are disordered; it reads SVGASGSSSR…HRDRERDRHH (63 aa). Phosphoserine occurs at positions 413 and 423. The segment at 418–469 is arg/Ser-rich domain; sequence RKRHRSRERSPSRSRESSRRHRDLLHNEDRHDDYFQERNREHERHRDRERDR. 2 stretches are compositionally biased toward basic and acidic residues: residues 425-434 and 441-471; these read ERSPSRSRES and LLHN…DRHH.

It belongs to the RRM CPSF6/7 family. Component of the cleavage factor Im (CFIm) complex which is a heterotetramer composed of two subunits of NUDT21/CPSF5 and two subunits of CPSF6 or CPSF7 or a heterodimer of CPSF6 and CPSF7. The cleavage factor Im (CFIm) complex associates with the CPSF and CSTF complexes to promote the assembly of the core mRNA 3'-processing machinery. Interacts with NUDT21/CPSF5. Interacts (via Arg/Ser-rich domain) with FIP1L1 (preferentially via unphosphorylated form and Arg/Glu/Asp-rich region); this interaction mediates, at least in part, the interaction between the CFIm and CPSF complexes and may be inhibited by CPSF7 hyper-phosphorylation. In terms of processing, phosphorylated. Asymmetrically dimethylated on arginine residues by PRMT1.

Its subcellular location is the nucleus. It localises to the cytoplasm. Its function is as follows. Component of the cleavage factor Im (CFIm) complex that functions as an activator of the pre-mRNA 3'-end cleavage and polyadenylation processing required for the maturation of pre-mRNA into functional mRNAs. CFIm contributes to the recruitment of multiprotein complexes on specific sequences on the pre-mRNA 3'-end, so called cleavage and polyadenylation signals (pA signals). Most pre-mRNAs contain multiple pA signals, resulting in alternative cleavage and polyadenylation (APA) producing mRNAs with variable 3'-end formation. The CFIm complex acts as a key regulator of cleavage and polyadenylation site choice during APA through its binding to 5'-UGUA-3' elements localized in the 3'-untranslated region (UTR) for a huge number of pre-mRNAs. CPSF7 activates directly the mRNA 3'-processing machinery. Binds to pA signals in RNA substrates. The sequence is that of Cleavage and polyadenylation specificity factor subunit 7 from Mus musculus (Mouse).